A 347-amino-acid polypeptide reads, in one-letter code: Large ribosomal subunit protein uL3 (347 aa).

Residues R325–Q347 are disordered.

The protein belongs to the universal ribosomal protein uL3 family. In terms of assembly, part of the 50S ribosomal subunit. Forms a cluster with proteins L14 and L24e.

Functionally, one of the primary rRNA binding proteins, it binds directly near the 3'-end of the 23S rRNA, where it nucleates assembly of the 50S subunit. In Thermococcus onnurineus (strain NA1), this protein is Large ribosomal subunit protein uL3.